The chain runs to 429 residues: Ribosomal RNA small subunit methyltransferase B (429 aa).

S-adenosyl-L-methionine-binding positions include 254-260, Asp277, Asp303, and Asp322; that span reads CAAPGGK. The active-site Nucleophile is the Cys375.

This sequence belongs to the class I-like SAM-binding methyltransferase superfamily. RsmB/NOP family.

The protein localises to the cytoplasm. It carries out the reaction cytidine(967) in 16S rRNA + S-adenosyl-L-methionine = 5-methylcytidine(967) in 16S rRNA + S-adenosyl-L-homocysteine + H(+). In terms of biological role, specifically methylates the cytosine at position 967 (m5C967) of 16S rRNA. This is Ribosomal RNA small subunit methyltransferase B from Shigella sonnei (strain Ss046).